A 303-amino-acid polypeptide reads, in one-letter code: Terpene synthase (303 aa).

Mg(2+) is bound by residues aspartate 69 and aspartate 73. The short motif at 69–73 (DDIQD) is the DDXXD motif element.

Belongs to the FPP/GGPP synthase family. Requires Mg(2+) as cofactor.

It carries out the reaction (2E)-geranyl diphosphate + H2O = (2E)-geraniol + diphosphate. Its function is as follows. Terpene synthase that is able to convert geraniol diphosphate to geraniol in tea leaves. This Matsumurasca onukii (Tea green leafhopper) protein is Terpene synthase.